Reading from the N-terminus, the 411-residue chain is Tyrosine--tRNA ligase (411 aa).

Tyr34 serves as a coordination point for L-tyrosine. The 'HIGH' region signature appears at 39-48 (CTATSLHIGS). 2 residues coordinate L-tyrosine: Tyr171 and Gln175. The 'KMSKS' region motif lies at 231 to 235 (KMGKT). An ATP-binding site is contributed by Lys234. The region spanning 345-411 (ISAYELFHEA…GKKRHILVRV (67 aa)) is the S4 RNA-binding domain.

The protein belongs to the class-I aminoacyl-tRNA synthetase family. TyrS type 1 subfamily. Homodimer.

The protein localises to the cytoplasm. It catalyses the reaction tRNA(Tyr) + L-tyrosine + ATP = L-tyrosyl-tRNA(Tyr) + AMP + diphosphate + H(+). In terms of biological role, catalyzes the attachment of tyrosine to tRNA(Tyr) in a two-step reaction: tyrosine is first activated by ATP to form Tyr-AMP and then transferred to the acceptor end of tRNA(Tyr). The protein is Tyrosine--tRNA ligase of Rickettsia felis (strain ATCC VR-1525 / URRWXCal2) (Rickettsia azadi).